The chain runs to 127 residues: Large ribosomal subunit protein bL12 (127 aa).

Residues 98–127 (PKPIKEGAPKAEAESLKSKLEEAGAEVELK) form a disordered region.

This sequence belongs to the bacterial ribosomal protein bL12 family. As to quaternary structure, homodimer. Part of the ribosomal stalk of the 50S ribosomal subunit. Forms a multimeric L10(L12)X complex, where L10 forms an elongated spine to which 2 to 4 L12 dimers bind in a sequential fashion. Binds GTP-bound translation factors.

Forms part of the ribosomal stalk which helps the ribosome interact with GTP-bound translation factors. Is thus essential for accurate translation. This is Large ribosomal subunit protein bL12 from Amoebophilus asiaticus (strain 5a2).